Consider the following 341-residue polypeptide: Lipoyl synthase (341 aa).

Positions 85, 90, 96, 111, 115, 118, and 325 each coordinate [4Fe-4S] cluster. The region spanning 97–314 is the Radical SAM core domain; sequence FSGGTATFMI…AEEGYKMGFK (218 aa).

The protein belongs to the radical SAM superfamily. Lipoyl synthase family. The cofactor is [4Fe-4S] cluster.

The protein resides in the cytoplasm. The enzyme catalyses [[Fe-S] cluster scaffold protein carrying a second [4Fe-4S](2+) cluster] + N(6)-octanoyl-L-lysyl-[protein] + 2 oxidized [2Fe-2S]-[ferredoxin] + 2 S-adenosyl-L-methionine + 4 H(+) = [[Fe-S] cluster scaffold protein] + N(6)-[(R)-dihydrolipoyl]-L-lysyl-[protein] + 4 Fe(3+) + 2 hydrogen sulfide + 2 5'-deoxyadenosine + 2 L-methionine + 2 reduced [2Fe-2S]-[ferredoxin]. The protein operates within protein modification; protein lipoylation via endogenous pathway; protein N(6)-(lipoyl)lysine from octanoyl-[acyl-carrier-protein]: step 2/2. Its function is as follows. Catalyzes the radical-mediated insertion of two sulfur atoms into the C-6 and C-8 positions of the octanoyl moiety bound to the lipoyl domains of lipoate-dependent enzymes, thereby converting the octanoylated domains into lipoylated derivatives. The polypeptide is Lipoyl synthase (Pseudomonas fluorescens (strain SBW25)).